The chain runs to 49 residues: Large ribosomal subunit protein bL33B (49 aa).

Belongs to the bacterial ribosomal protein bL33 family.

In Staphylococcus epidermidis (strain ATCC 12228 / FDA PCI 1200), this protein is Large ribosomal subunit protein bL33B (rpmG2).